A 388-amino-acid chain; its full sequence is Succinate--CoA ligase [ADP-forming] subunit beta (388 aa).

Residues Lys-9–Glu-244 form the ATP-grasp domain. ATP is bound by residues Lys-46, Gly-53–Gly-55, Glu-99, Thr-102, and Glu-107. Asn-199 and Asp-213 together coordinate Mg(2+). Residues Asn-264 and Gly-321–Val-323 contribute to the substrate site.

This sequence belongs to the succinate/malate CoA ligase beta subunit family. As to quaternary structure, heterotetramer of two alpha and two beta subunits. The cofactor is Mg(2+).

It catalyses the reaction succinate + ATP + CoA = succinyl-CoA + ADP + phosphate. The catalysed reaction is GTP + succinate + CoA = succinyl-CoA + GDP + phosphate. It participates in carbohydrate metabolism; tricarboxylic acid cycle; succinate from succinyl-CoA (ligase route): step 1/1. Its function is as follows. Succinyl-CoA synthetase functions in the citric acid cycle (TCA), coupling the hydrolysis of succinyl-CoA to the synthesis of either ATP or GTP and thus represents the only step of substrate-level phosphorylation in the TCA. The beta subunit provides nucleotide specificity of the enzyme and binds the substrate succinate, while the binding sites for coenzyme A and phosphate are found in the alpha subunit. The polypeptide is Succinate--CoA ligase [ADP-forming] subunit beta (Marinobacter nauticus (strain ATCC 700491 / DSM 11845 / VT8) (Marinobacter aquaeolei)).